The sequence spans 259 residues: Triosephosphate isomerase (259 aa).

Residue 10–12 participates in substrate binding; the sequence is NWK. His-102 (electrophile) is an active-site residue. Residue Glu-174 is the Proton acceptor of the active site. Residues Gly-180, Ser-220, and 241–242 contribute to the substrate site; that span reads GG.

Belongs to the triosephosphate isomerase family. As to quaternary structure, homodimer.

Its subcellular location is the cytoplasm. The catalysed reaction is D-glyceraldehyde 3-phosphate = dihydroxyacetone phosphate. It participates in carbohydrate biosynthesis; gluconeogenesis. It functions in the pathway carbohydrate degradation; glycolysis; D-glyceraldehyde 3-phosphate from glycerone phosphate: step 1/1. Involved in the gluconeogenesis. Catalyzes stereospecifically the conversion of dihydroxyacetone phosphate (DHAP) to D-glyceraldehyde-3-phosphate (G3P). This Cutibacterium acnes (strain DSM 16379 / KPA171202) (Propionibacterium acnes) protein is Triosephosphate isomerase.